The chain runs to 277 residues: Caspase-3 (277 aa).

Position 1 is an N-acetylmethionine (Met-1). 2 consecutive propeptides follow at residues 1 to 9 (MENTENSVD) and 10 to 28 (AKSF…KSMD). Position 11 is an N6-acetyllysine (Lys-11). Phosphoserine is present on Ser-26. Catalysis depends on residues His-121 and Cys-163. Cys-163 carries the post-translational modification S-nitrosocysteine; in inhibited form.

This sequence belongs to the peptidase C14A family. Heterotetramer that consists of two anti-parallel arranged heterodimers, each one formed by a 17 kDa (p17) and a 12 kDa (p12) subunit. Interacts with BIRC6/bruce. Cleavage by granzyme B, caspase-6, caspase-8 and caspase-10 generates the two active subunits. Additional processing of the propeptides is likely due to the autocatalytic activity of the activated protease. Active heterodimers between the small subunit of caspase-7 protease and the large subunit of caspase-3 also occur and vice versa. In terms of processing, S-nitrosylated on its catalytic site cysteine in unstimulated cell lines and denitrosylated upon activation of the Fas apoptotic pathway, associated with an increase in intracellular caspase activity. Fas therefore activates caspase-3 not only by inducing the cleavage of the caspase zymogen to its active subunits, but also by stimulating the denitrosylation of its active site thiol. Post-translationally, ubiquitinated by BIRC6; this activity is inhibited by DIABLO/SMAC.

The protein resides in the cytoplasm. It catalyses the reaction Strict requirement for an Asp residue at positions P1 and P4. It has a preferred cleavage sequence of Asp-Xaa-Xaa-Asp-|- with a hydrophobic amino-acid residue at P2 and a hydrophilic amino-acid residue at P3, although Val or Ala are also accepted at this position.. Inhibited by BIRC6; following inhibition of BIRC6-caspase binding by DIABLO/SMAC, BIRC6 is subjected to caspase cleavage, leading to an increase in active caspases. Involved in the activation cascade of caspases responsible for apoptosis execution. At the onset of apoptosis, it proteolytically cleaves poly(ADP-ribose) polymerase PARP1 at a '216-Asp-|-Gly-217' bond. Cleaves and activates sterol regulatory element binding proteins (SREBPs) between the basic helix-loop-helix leucine zipper domain and the membrane attachment domain. Cleaves and activates caspase-6, -7 and -9 (CASP6, CASP7 and CASP9, respectively). Cleaves and inactivates interleukin-18 (IL18). Triggers cell adhesion in sympathetic neurons through RET cleavage. Cleaves IL-1 beta between an Asp and an Ala, releasing the mature cytokine which is involved in a variety of inflammatory processes. Cleaves and inhibits serine/threonine-protein kinase AKT1 in response to oxidative stress. Acts as an inhibitor of type I interferon production during virus-induced apoptosis by mediating cleavage of antiviral proteins CGAS, IRF3 and MAVS, thereby preventing cytokine overproduction. Also involved in pyroptosis by mediating cleavage and activation of gasdermin-E (GSDME). Cleaves XRCC4 and phospholipid scramblase proteins XKR4, XKR8 and XKR9, leading to promote phosphatidylserine exposure on apoptotic cell surface. Cleaves BIRC6 following inhibition of BIRC6-caspase binding by DIABLO/SMAC. The chain is Caspase-3 (CASP3) from Canis lupus familiaris (Dog).